We begin with the raw amino-acid sequence, 88 residues long: Small ribosomal subunit protein uS17 (88 aa).

This sequence belongs to the universal ribosomal protein uS17 family. Part of the 30S ribosomal subunit.

In terms of biological role, one of the primary rRNA binding proteins, it binds specifically to the 5'-end of 16S ribosomal RNA. The chain is Small ribosomal subunit protein uS17 from Nitratidesulfovibrio vulgaris (strain ATCC 29579 / DSM 644 / CCUG 34227 / NCIMB 8303 / VKM B-1760 / Hildenborough) (Desulfovibrio vulgaris).